The chain runs to 455 residues: Periplasmic pH-dependent serine endoprotease DegQ (455 aa).

An N-terminal signal peptide occupies residues 1–27 (MKKQTQLLSALALSVGLTLSASFQAVA). Substrate contacts are provided by residues E59, H109, D139, G212, 212–214 (GNS), 230–234 (TAILA), and 269–273 (LGIKG). Active-site charge relay system residues include H109 and D139. The active-site Charge relay system is S214. PDZ domains are found at residues 258–349 (LIDF…LRNG) and 355–447 (EVTL…VRGN).

It belongs to the peptidase S1C family. DegQ can reversibly switch between different oligomeric forms that represent inactive (6-mer) and active (12- and 24-mer) protease states. Substrate binding triggers the conversion of the resting DegQ trimer and hexamer into catalytically active 12- and 24-mers. The conversion of 6-mer (DegQ6) into 12-mer (DegQ12) or 24-mer (DegQ24) is crucial in regulating protease activity.

The protein localises to the periplasm. The enzyme catalyses Acts on substrates that are at least partially unfolded. The cleavage site P1 residue is normally between a pair of hydrophobic residues, such as Val-|-Val.. Its activity is regulated as follows. Inhibited by diisopropylfluorophosphate (DFP). DegQ could degrade transiently denatured and unfolded proteins which accumulate in the periplasm following stress conditions. DegQ is efficient with Val-Xaa and Ile-Xaa peptide bonds, suggesting a preference for a beta-branched side chain amino acids. Only unfolded proteins devoid of disulfide bonds appear capable to be cleaved, thereby preventing non-specific proteolysis of folded proteins. DegQ can substitute for the periplasmic protease DegP. This chain is Periplasmic pH-dependent serine endoprotease DegQ (degQ), found in Escherichia coli (strain K12).